Reading from the N-terminus, the 518-residue chain is MTEKYRPVRDIKPAPAAMQSTKQAGHPVFRSVVAFVSVLVLLVSGLGYLAVGKVDGVASGNLNLGGGRGIQDGNAADGATDILLVGSDSRSDAQGNTLTEEELAMLRAGDEENDNTDTIMVIRVPNDGSSATAVSIPRDTYIHDDDYGNMKINGVYGAYKDARRAELMEQGFTNESELETRAKDAGREGLIDAVSDLTGITVDHYAEVGLLGFVLLTDAVGGVEVCLNNAVDEPLSGANFPAGRQTLGGSDALSYVRQRHDLPRGDLDRIVRQQSYMASLVNQVLSSGTLTNPAKLSALADAVTRSVVIDEGWEIMSFATQLQNLAGGNVTFATIPVTSIDGTGDYGESVVTIDVNQVHAFFQEALGEAEPAPEDGSDDQSADQAPDLSEVEVHVLNASYVEGLANGIAAQLQELGYSIAETGNAAEGLYYESQILAAEEDSAKALAISEALGGLPIVANSSLDDNTVIVVSAGDYAGPTAEANAVTSSTVGQPGADVGEPIESPEFDAGGDGPRCVN.

Topologically, residues 1-31 (MTEKYRPVRDIKPAPAAMQSTKQAGHPVFRS) are cytoplasmic. Residues 32-52 (VVAFVSVLVLLVSGLGYLAVG) traverse the membrane as a helical segment. The Periplasmic segment spans residues 53-518 (KVDGVASGNL…AGGDGPRCVN (466 aa)). The disordered stretch occupies residues 485–518 (AVTSSTVGQPGADVGEPIESPEFDAGGDGPRCVN).

It belongs to the LytR/CpsA/Psr (LCP) family. In terms of assembly, forms homodimers and homotetramers.

Its subcellular location is the cell inner membrane. In terms of biological role, involved in cell wall biosynthesis. May be responsible for the transfer of arabinogalactan onto peptidoglycan. In vitro, has pyrophosphatase activity. The sequence is that of Cell wall biosynthesis protein LcpA from Corynebacterium glutamicum (strain ATCC 13032 / DSM 20300 / JCM 1318 / BCRC 11384 / CCUG 27702 / LMG 3730 / NBRC 12168 / NCIMB 10025 / NRRL B-2784 / 534).